A 341-amino-acid chain; its full sequence is MIQDEVPVSAQTIQWRCIESKIESKRLHYGRFAISPFRKGQANTVGIAIRRSLLGEIEGTAITYAKSKNVIHEYSTIIGIEESINDILINFKEIVLRSDSYETQKAYISITGPKDITAEDILLPPSVQAIDDSQHIATITKDITLDIEIEIQKDRGYRIQDSKESQAGEFFIDAVFMPIRKANYSVHSFGNNKKFQEILFIEIWTDGSLTPKEALYEASRNLIDLFLPFLHTEEEEIISDRDEKSESNGNILLSNSISTDIDRMAKEVAFKHIFIDQLELPARAYNCLKKVDVHTISDLLKYSQDDLRKIKNFGKKSVDQVLEALQERFAINLPRNKFSID.

Positions 1–233 are alpha N-terminal domain (alpha-NTD); sequence MIQDEVPVSA…DLFLPFLHTE (233 aa). An alpha C-terminal domain (alpha-CTD) region spans residues 262 to 341; it reads DRMAKEVAFK…NLPRNKFSID (80 aa).

The protein belongs to the RNA polymerase alpha chain family. In terms of assembly, in plastids the minimal PEP RNA polymerase catalytic core is composed of four subunits: alpha, beta, beta', and beta''. When a (nuclear-encoded) sigma factor is associated with the core the holoenzyme is formed, which can initiate transcription.

It is found in the plastid. Its subcellular location is the chloroplast. It carries out the reaction RNA(n) + a ribonucleoside 5'-triphosphate = RNA(n+1) + diphosphate. Its function is as follows. DNA-dependent RNA polymerase catalyzes the transcription of DNA into RNA using the four ribonucleoside triphosphates as substrates. The polypeptide is DNA-directed RNA polymerase subunit alpha (Angiopteris evecta (Mule's foot fern)).